The sequence spans 501 residues: uncharacterized protein (501 aa).

7 consecutive transmembrane segments (helical) span residues 14–34 (AIFI…SGSV), 73–93 (FILF…LGYM), 111–131 (IFGI…ICIF), 197–217 (FIIA…VLLI), 274–294 (ILLS…YYFG), 297–317 (FNLI…YNLI), and 466–486 (FLVL…RLIL).

It is found in the membrane. This is an uncharacterized protein from Dictyostelium discoideum (Social amoeba).